Reading from the N-terminus, the 90-residue chain is UPF0367 protein PMT9312_0127 (90 aa).

Belongs to the UPF0367 family.

The sequence is that of UPF0367 protein PMT9312_0127 from Prochlorococcus marinus (strain MIT 9312).